The sequence spans 209 residues: N-(5'-phosphoribosyl)anthranilate isomerase (209 aa).

This sequence belongs to the TrpF family.

It carries out the reaction N-(5-phospho-beta-D-ribosyl)anthranilate = 1-(2-carboxyphenylamino)-1-deoxy-D-ribulose 5-phosphate. It functions in the pathway amino-acid biosynthesis; L-tryptophan biosynthesis; L-tryptophan from chorismate: step 3/5. This is N-(5'-phosphoribosyl)anthranilate isomerase from Erythrobacter litoralis (strain HTCC2594).